The chain runs to 597 residues: Elongation factor 4 (597 aa).

In terms of domain architecture, tr-type G spans 2–184 (DHIRNFSIIA…ALIAKVPPPK (183 aa)). Residues 14-19 (DHGKST) and 131-134 (NKID) contribute to the GTP site.

This sequence belongs to the TRAFAC class translation factor GTPase superfamily. Classic translation factor GTPase family. LepA subfamily.

The protein localises to the cell inner membrane. The catalysed reaction is GTP + H2O = GDP + phosphate + H(+). Required for accurate and efficient protein synthesis under certain stress conditions. May act as a fidelity factor of the translation reaction, by catalyzing a one-codon backward translocation of tRNAs on improperly translocated ribosomes. Back-translocation proceeds from a post-translocation (POST) complex to a pre-translocation (PRE) complex, thus giving elongation factor G a second chance to translocate the tRNAs correctly. Binds to ribosomes in a GTP-dependent manner. The protein is Elongation factor 4 of Burkholderia vietnamiensis (strain G4 / LMG 22486) (Burkholderia cepacia (strain R1808)).